Reading from the N-terminus, the 281-residue chain is NADPH-dependent 7-cyano-7-deazaguanine reductase (281 aa).

88–90 (IES) lines the substrate pocket. NADPH is bound at residue 90 to 91 (SK). Cys189 serves as the catalytic Thioimide intermediate. Asp196 functions as the Proton donor in the catalytic mechanism. 228-229 (HE) serves as a coordination point for substrate. Residue 257 to 258 (RG) coordinates NADPH.

Belongs to the GTP cyclohydrolase I family. QueF type 2 subfamily. In terms of assembly, homodimer.

Its subcellular location is the cytoplasm. It catalyses the reaction 7-aminomethyl-7-carbaguanine + 2 NADP(+) = 7-cyano-7-deazaguanine + 2 NADPH + 3 H(+). The protein operates within tRNA modification; tRNA-queuosine biosynthesis. Catalyzes the NADPH-dependent reduction of 7-cyano-7-deazaguanine (preQ0) to 7-aminomethyl-7-deazaguanine (preQ1). This chain is NADPH-dependent 7-cyano-7-deazaguanine reductase, found in Proteus mirabilis (strain HI4320).